The following is a 242-amino-acid chain: Probable transcriptional regulatory protein MHP7448_0474 (242 aa).

It belongs to the TACO1 family.

The protein resides in the cytoplasm. The chain is Probable transcriptional regulatory protein MHP7448_0474 from Mesomycoplasma hyopneumoniae (strain 7448) (Mycoplasma hyopneumoniae).